We begin with the raw amino-acid sequence, 369 residues long: Chorismate synthase (369 aa).

The NADP(+) site is built by arginine 48 and arginine 54. FMN-binding positions include 125 to 127 (RSS), 238 to 239 (NA), glycine 278, 293 to 297 (KPTSS), and arginine 319.

This sequence belongs to the chorismate synthase family. Homotetramer. It depends on FMNH2 as a cofactor.

The catalysed reaction is 5-O-(1-carboxyvinyl)-3-phosphoshikimate = chorismate + phosphate. It participates in metabolic intermediate biosynthesis; chorismate biosynthesis; chorismate from D-erythrose 4-phosphate and phosphoenolpyruvate: step 7/7. Functionally, catalyzes the anti-1,4-elimination of the C-3 phosphate and the C-6 proR hydrogen from 5-enolpyruvylshikimate-3-phosphate (EPSP) to yield chorismate, which is the branch point compound that serves as the starting substrate for the three terminal pathways of aromatic amino acid biosynthesis. This reaction introduces a second double bond into the aromatic ring system. This Burkholderia thailandensis (strain ATCC 700388 / DSM 13276 / CCUG 48851 / CIP 106301 / E264) protein is Chorismate synthase.